A 215-amino-acid polypeptide reads, in one-letter code: uncharacterized protein (215 aa).

The protein belongs to the mimivirus L31/R44 family.

This is an uncharacterized protein from Acanthamoeba polyphaga (Amoeba).